The chain runs to 250 residues: MLLIAGLGNPGPQYAHNRHNIGFMAADEIFRRHRFSNWQKKFQAEIADGVIDGEKVLLVKPQTFMNLSGQSIGEAMRFYKLTPADLVVIYDELDLVPGKLRIKTGGGPGGHNGIKSIDAHMQSFPGGQNYRRMRLGIGHPGAKELVHNYVLGDFAKADNEWLDTLMGAVADNVAMLARREDNSFMNRIALAMGDGNQRPGGVKTDPAQLEKAPPKAQSHIRQARQNQKKPNIPESGPMAEMLKKLLGKKD.

Tyrosine 14 contacts tRNA. Histidine 19 serves as the catalytic Proton acceptor. TRNA is bound by residues phenylalanine 64, asparagine 66, and asparagine 112. The segment at methionine 192–aspartate 250 is disordered. The span at histidine 219–lysine 229 shows a compositional bias: polar residues. The span at methionine 241–aspartate 250 shows a compositional bias: basic and acidic residues.

The protein belongs to the PTH family. In terms of assembly, monomer.

The protein resides in the cytoplasm. The catalysed reaction is an N-acyl-L-alpha-aminoacyl-tRNA + H2O = an N-acyl-L-amino acid + a tRNA + H(+). Its function is as follows. Hydrolyzes ribosome-free peptidyl-tRNAs (with 1 or more amino acids incorporated), which drop off the ribosome during protein synthesis, or as a result of ribosome stalling. In terms of biological role, catalyzes the release of premature peptidyl moieties from peptidyl-tRNA molecules trapped in stalled 50S ribosomal subunits, and thus maintains levels of free tRNAs and 50S ribosomes. This chain is Peptidyl-tRNA hydrolase, found in Brucella suis (strain ATCC 23445 / NCTC 10510).